Reading from the N-terminus, the 223-residue chain is Ribosome maturation factor RimM (223 aa).

Low complexity predominate over residues M1–P12. Disordered regions lie at residues M1–L44 and V203–G223. A PRC barrel domain is found at D135 to L210.

The protein belongs to the RimM family. In terms of assembly, binds ribosomal protein uS19.

The protein localises to the cytoplasm. An accessory protein needed during the final step in the assembly of 30S ribosomal subunit, possibly for assembly of the head region. Essential for efficient processing of 16S rRNA. May be needed both before and after RbfA during the maturation of 16S rRNA. It has affinity for free ribosomal 30S subunits but not for 70S ribosomes. This is Ribosome maturation factor RimM from Methylorubrum extorquens (strain CM4 / NCIMB 13688) (Methylobacterium extorquens).